The following is a 321-amino-acid chain: Lipoyl synthase (321 aa).

The [4Fe-4S] cluster site is built by C68, C73, C79, C94, C98, C101, and S308. The Radical SAM core domain occupies 80-297 (FNHGTATFMI…KDVAMGLGFS (218 aa)).

It belongs to the radical SAM superfamily. Lipoyl synthase family. Requires [4Fe-4S] cluster as cofactor.

It localises to the cytoplasm. The catalysed reaction is [[Fe-S] cluster scaffold protein carrying a second [4Fe-4S](2+) cluster] + N(6)-octanoyl-L-lysyl-[protein] + 2 oxidized [2Fe-2S]-[ferredoxin] + 2 S-adenosyl-L-methionine + 4 H(+) = [[Fe-S] cluster scaffold protein] + N(6)-[(R)-dihydrolipoyl]-L-lysyl-[protein] + 4 Fe(3+) + 2 hydrogen sulfide + 2 5'-deoxyadenosine + 2 L-methionine + 2 reduced [2Fe-2S]-[ferredoxin]. The protein operates within protein modification; protein lipoylation via endogenous pathway; protein N(6)-(lipoyl)lysine from octanoyl-[acyl-carrier-protein]: step 2/2. Its function is as follows. Catalyzes the radical-mediated insertion of two sulfur atoms into the C-6 and C-8 positions of the octanoyl moiety bound to the lipoyl domains of lipoate-dependent enzymes, thereby converting the octanoylated domains into lipoylated derivatives. In Aeromonas hydrophila subsp. hydrophila (strain ATCC 7966 / DSM 30187 / BCRC 13018 / CCUG 14551 / JCM 1027 / KCTC 2358 / NCIMB 9240 / NCTC 8049), this protein is Lipoyl synthase.